A 266-amino-acid chain; its full sequence is Methylsterol monooxygenase 2-2 (266 aa).

A run of 3 helical transmembrane segments spans residues 24–44 (IGSF…FIFL), 71–91 (RLLL…YPVF), and 107–127 (EVSA…YWGH). The 135-residue stretch at 113–247 (LFYFIIEDFV…FVYMDWIFGT (135 aa)) folds into the Fatty acid hydroxylase domain. Positions 127–131 (HRILH) match the Histidine box-1 motif. Positions 140-144 (HSVHH) match the Histidine box-2 motif. A helical membrane pass occupies residues 162 to 182 (ILFLGFATIVGPALTGPHLIT). A Histidine box-3 motif is present at residues 219–225 (FHDYHHR).

Belongs to the sterol desaturase family. Fe cation is required as a cofactor. In terms of tissue distribution, expressed in shoots, roots, siliques and flowers, and, slightly, in developing seeds.

The protein localises to the endoplasmic reticulum membrane. It carries out the reaction 4,4-dimethyl-5alpha-cholest-7-en-3beta-ol + 6 Fe(II)-[cytochrome b5] + 3 O2 + 5 H(+) = 4alpha-carboxy-4beta-methyl-5alpha-cholest-7-ene-3beta-ol + 6 Fe(III)-[cytochrome b5] + 4 H2O. The enzyme catalyses 24-methylidenelophenol + 6 Fe(II)-[cytochrome b5] + 3 O2 + 5 H(+) = 4alpha-carboxy-ergosta-7,24(24(1))-dien-3beta-ol + 6 Fe(III)-[cytochrome b5] + 4 H2O. In terms of biological role, non-heme iron oxygenase involved in sterols biosynthesis by catalyzing the removal of the second methyl group at the C-4 position. 24-ethylidenelophenol and 24-ethyllophenol are the preferred substrates. Together with SMO2-1, required during embryogenesis, probably by maintaining sterols and auxin homeostasis. In Arabidopsis thaliana (Mouse-ear cress), this protein is Methylsterol monooxygenase 2-2.